The chain runs to 275 residues: MSTCGRKALTLLSSVFAVCGLGLLGIAVSTDYWLYLEEGIILPQNQSTEVKMSLHSGLWRVCFLAGEERGRCFTIEYVMPMNSQMTSESTVNVLKMIRSATPFPLVSLFFMFIGFILSNIGHIRPHRTILAFVSGIFFILSGLSLVVGLVLYISSINDEMLNRTKDAETYFNYKYGWSFAFAAISFLLTESAGVMSVYLFMKRYTAEDMYRPHPGFYRPRLSNCSDYSGQFLHPDAWIRGRSPSDISSDASLQMNSNYPALLKCPDYDQMSSSPC.

4 consecutive transmembrane segments (helical) span residues 8–28, 103–123, 129–149, and 181–201; these read ALTL…GIAV, FPLV…IGHI, ILAF…VVGL, and FAAI…YLFM.

It belongs to the PMP-22/EMP/MP20 family. CACNG subfamily. The L-type calcium channel is composed of five subunits: alpha-1, alpha-2/delta, beta and gamma. Acts as an auxiliary subunit for AMPA-selective glutamate receptors (AMPARs). Found in a complex with GRIA1, GRIA2, GRIA3, GRIA4, CNIH2, CNIH3, CACNG2, CACNG3, CACNG4, CACNG7 and CACNG8. Interacts with GRIA1, GRIA2, GRIA3 and GRIA4.

It is found in the membrane. It localises to the postsynaptic density membrane. Functionally, regulates the gating properties of AMPA-selective glutamate receptors (AMPARs). Modulates their gating properties by accelerating their rates of activation, deactivation and desensitization. Displays subunit-specific AMPA receptor regulation. Shows specificity for GRIA1, GRIA4 and the long isoform of GRIA2. According to PubMed:18817736, shows only specificity for GRIA2 and specifically to the form of GRIA2 for which a single amino acid in the pore region has been edited from a glutamine to an arginine residue. Thought to stabilize the calcium channel in an inactivated (closed) state. The polypeptide is Voltage-dependent calcium channel gamma-5 subunit (Cacng5) (Rattus norvegicus (Rat)).